The primary structure comprises 325 residues: Acetyl-coenzyme A carboxylase carboxyl transferase subunit alpha (325 aa).

Residues 43-297 (ELENNSTQLR…KTSLIAHLRQ (255 aa)) form the CoA carboxyltransferase C-terminal domain.

This sequence belongs to the AccA family. As to quaternary structure, acetyl-CoA carboxylase is a heterohexamer composed of biotin carboxyl carrier protein (AccB), biotin carboxylase (AccC) and two subunits each of ACCase subunit alpha (AccA) and ACCase subunit beta (AccD).

The protein resides in the cytoplasm. The catalysed reaction is N(6)-carboxybiotinyl-L-lysyl-[protein] + acetyl-CoA = N(6)-biotinyl-L-lysyl-[protein] + malonyl-CoA. The protein operates within lipid metabolism; malonyl-CoA biosynthesis; malonyl-CoA from acetyl-CoA: step 1/1. In terms of biological role, component of the acetyl coenzyme A carboxylase (ACC) complex. First, biotin carboxylase catalyzes the carboxylation of biotin on its carrier protein (BCCP) and then the CO(2) group is transferred by the carboxyltransferase to acetyl-CoA to form malonyl-CoA. The protein is Acetyl-coenzyme A carboxylase carboxyl transferase subunit alpha of Cyanothece sp. (strain PCC 7425 / ATCC 29141).